Here is a 343-residue protein sequence, read N- to C-terminus: Heat-inducible transcription repressor HrcA (343 aa).

The protein belongs to the HrcA family.

Functionally, negative regulator of class I heat shock genes (grpE-dnaK-dnaJ and groELS operons). Prevents heat-shock induction of these operons. This is Heat-inducible transcription repressor HrcA from Thermoanaerobacter pseudethanolicus (strain ATCC 33223 / 39E) (Clostridium thermohydrosulfuricum).